The primary structure comprises 353 residues: Photosystem II D2 protein (353 aa).

Thr2 is subject to N-acetylthreonine. A Phosphothreonine modification is found at Thr2. The chain crosses the membrane as a helical span at residues Cys41 to Thr61. Chlorophyll a is bound at residue His118. A helical membrane pass occupies residues Gly125–Pro141. Pheophytin a is bound by residues Gln130 and Asn143. The chain crosses the membrane as a helical span at residues Val153 to Ser166. His198 is a chlorophyll a binding site. Residues Ala208–Asp228 form a helical membrane-spanning segment. Residues His215 and Phe262 each contribute to the a plastoquinone site. His215 provides a ligand contact to Fe cation. Position 269 (His269) interacts with Fe cation. The helical transmembrane segment at Gly279–Arg295 threads the bilayer.

Belongs to the reaction center PufL/M/PsbA/D family. PSII is composed of 1 copy each of membrane proteins PsbA, PsbB, PsbC, PsbD, PsbE, PsbF, PsbH, PsbI, PsbJ, PsbK, PsbL, PsbM, PsbT, PsbX, PsbY, PsbZ, Psb30/Ycf12, at least 3 peripheral proteins of the oxygen-evolving complex and a large number of cofactors. It forms dimeric complexes. The cofactor is The D1/D2 heterodimer binds P680, chlorophylls that are the primary electron donor of PSII, and subsequent electron acceptors. It shares a non-heme iron and each subunit binds pheophytin, quinone, additional chlorophylls, carotenoids and lipids. There is also a Cl(-1) ion associated with D1 and D2, which is required for oxygen evolution. The PSII complex binds additional chlorophylls, carotenoids and specific lipids..

The protein resides in the plastid. It is found in the chloroplast thylakoid membrane. The enzyme catalyses 2 a plastoquinone + 4 hnu + 2 H2O = 2 a plastoquinol + O2. Functionally, photosystem II (PSII) is a light-driven water:plastoquinone oxidoreductase that uses light energy to abstract electrons from H(2)O, generating O(2) and a proton gradient subsequently used for ATP formation. It consists of a core antenna complex that captures photons, and an electron transfer chain that converts photonic excitation into a charge separation. The D1/D2 (PsbA/PsbD) reaction center heterodimer binds P680, the primary electron donor of PSII as well as several subsequent electron acceptors. D2 is needed for assembly of a stable PSII complex. The sequence is that of Photosystem II D2 protein from Nuphar advena (Common spatterdock).